Consider the following 490-residue polypeptide: ATP synthase subunit beta, chloroplastic (490 aa).

Residue 170–177 (GGXGVGKT) participates in ATP binding.

It belongs to the ATPase alpha/beta chains family. F-type ATPases have 2 components, CF(1) - the catalytic core - and CF(0) - the membrane proton channel. CF(1) has five subunits: alpha(3), beta(3), gamma(1), delta(1), epsilon(1). CF(0) has four main subunits: a(1), b(1), b'(1) and c(9-12).

It is found in the plastid. The protein localises to the chloroplast thylakoid membrane. It catalyses the reaction ATP + H2O + 4 H(+)(in) = ADP + phosphate + 5 H(+)(out). Produces ATP from ADP in the presence of a proton gradient across the membrane. The catalytic sites are hosted primarily by the beta subunits. The polypeptide is ATP synthase subunit beta, chloroplastic (Ipomoea coccinea (Scarlet morning-glory)).